We begin with the raw amino-acid sequence, 168 residues long: MQIDPSHYQIAVEQAQAVAAAARSCRCRRRGRRADLDALVVSKENRENAAHSASSADAQYQQAIAALDARSSTLERSRVVAPVDGYITNLQTFKGNYAVAGQAKLAIVDSHSFWVYGYFEETKLPRVKIGAPAEMRLMSGGVMKGHVESISRGIYDRDNPQSRDLVRT.

Functionally, involved in the resistance (detoxification) of the fungal toxin fusaric acid. This Burkholderia cepacia (Pseudomonas cepacia) protein is Fusaric acid resistance protein FusE (fusE).